The sequence spans 945 residues: Collagen-like protein 1 (945 aa).

Disordered regions lie at residues 80–226 and 257–441; these read SLKG…SPDL and GEKG…DKGE. Collagen-like domains lie at 83–142 and 146–205; these read GDPG…QGDK and GDVG…KGDK. Composition is skewed to basic and acidic residues over residues 109–145 and 168–208; these read QGTKGEQGDQGEQGDKGDKGDKGDVGAKGDQGDKGDQ and DQGD…KGDK. Asparagine 211 carries an N-linked (GlcNAc...) asparagine; by host glycan. Collagen-like domains lie at 257-376, 383-442, 488-547, 554-613, and 635-694; these read GEKG…KGDK, GDKG…KGEN, GEKG…VGDK, GDKG…KGDV, and GDKG…VGAS. Asparagine 442 carries an N-linked (GlcNAc...) asparagine; by host glycan. A compositionally biased stretch (basic and acidic residues) spans 488–687; sequence GEKGDKGDTG…DKGDKGDKGD (200 aa). The tract at residues 488–712 is disordered; the sequence is GEKGDKGDTG…SPTTGENGDS (225 aa). Polar residues predominate over residues 703–712; it reads SPTTGENGDS. N-linked (GlcNAc...) asparagine; by host glycosylation occurs at asparagine 716. The interval 733-768 is disordered; the sequence is TNIKGDKGDKGDKGDKGDKGDTGDVGLKGDTGTPGS. Residues 736-754 show a composition bias toward basic and acidic residues; that stretch reads KGDKGDKGDKGDKGDKGDT. The segment covering 756 to 765 has biased composition (low complexity); that stretch reads DVGLKGDTGT.

In terms of processing, may be hydroxylated on lysine by the viral-encoded procollagen-lysine,2-oxoglutarate 5-dioxygenase.

The protein localises to the virion. Its function is as follows. May participate in the formation of a layer of cross-linked glycosylated fibrils at the viral surface thus giving it a hairy-like appearance. The protein is Collagen-like protein 1 of Acanthamoeba polyphaga mimivirus (APMV).